The primary structure comprises 556 residues: DNA ligase B (556 aa).

Catalysis depends on Lys-124, which acts as the N6-AMP-lysine intermediate.

Belongs to the NAD-dependent DNA ligase family. LigB subfamily.

The catalysed reaction is NAD(+) + (deoxyribonucleotide)n-3'-hydroxyl + 5'-phospho-(deoxyribonucleotide)m = (deoxyribonucleotide)n+m + AMP + beta-nicotinamide D-nucleotide.. Its function is as follows. Catalyzes the formation of phosphodiester linkages between 5'-phosphoryl and 3'-hydroxyl groups in double-stranded DNA using NAD as a coenzyme and as the energy source for the reaction. The polypeptide is DNA ligase B (Pseudomonas fluorescens (strain ATCC BAA-477 / NRRL B-23932 / Pf-5)).